Consider the following 681-residue polypeptide: Transmembrane protein 214-A (681 aa).

2 disordered regions span residues 1–41 (MASG…GTAP) and 58–99 (KKQN…GSRQ). 2 N-linked (GlcNAc...) asparagine glycosylation sites follow: Asn300 and Asn324. 2 helical membrane passes run 471–491 (GFPW…FVFY) and 608–628 (LLLH…EAAV).

This sequence belongs to the TMEM214 family. In terms of assembly, constitutively interacts with CASP4; required for the localization of procaspase 4 to the ER.

The protein resides in the endoplasmic reticulum membrane. Its function is as follows. Critical mediator, in cooperation with CASP4, of endoplasmic reticulum-stress induced apoptosis. Required or the activation of CASP4 following endoplasmic reticulum stress. The protein is Transmembrane protein 214-A (tmem214-a) of Xenopus laevis (African clawed frog).